We begin with the raw amino-acid sequence, 370 residues long: tRNA-specific 2-thiouridylase MnmA (370 aa).

ATP is bound by residues 9 to 16 (GMSGGVDS) and Met35. Residues 95–97 (NPD) form an interaction with target base in tRNA region. Residue Cys100 is the Nucleophile of the active site. Cysteines 100 and 196 form a disulfide. Gly124 provides a ligand contact to ATP. The segment at 146-148 (KDQ) is interaction with tRNA. Catalysis depends on Cys196, which acts as the Cysteine persulfide intermediate. Positions 308–309 (RY) are interaction with tRNA.

The protein belongs to the MnmA/TRMU family.

The protein resides in the cytoplasm. The catalysed reaction is S-sulfanyl-L-cysteinyl-[protein] + uridine(34) in tRNA + AH2 + ATP = 2-thiouridine(34) in tRNA + L-cysteinyl-[protein] + A + AMP + diphosphate + H(+). Catalyzes the 2-thiolation of uridine at the wobble position (U34) of tRNA, leading to the formation of s(2)U34. The protein is tRNA-specific 2-thiouridylase MnmA of Ralstonia pickettii (strain 12J).